A 156-amino-acid polypeptide reads, in one-letter code: ATP synthase subunit b (156 aa).

Residues 7–27 (LFAQIIVFFGLVWFTMKFVWP) traverse the membrane as a helical segment.

It belongs to the ATPase B chain family. In terms of assembly, F-type ATPases have 2 components, F(1) - the catalytic core - and F(0) - the membrane proton channel. F(1) has five subunits: alpha(3), beta(3), gamma(1), delta(1), epsilon(1). F(0) has three main subunits: a(1), b(2) and c(10-14). The alpha and beta chains form an alternating ring which encloses part of the gamma chain. F(1) is attached to F(0) by a central stalk formed by the gamma and epsilon chains, while a peripheral stalk is formed by the delta and b chains.

The protein resides in the cell inner membrane. In terms of biological role, f(1)F(0) ATP synthase produces ATP from ADP in the presence of a proton or sodium gradient. F-type ATPases consist of two structural domains, F(1) containing the extramembraneous catalytic core and F(0) containing the membrane proton channel, linked together by a central stalk and a peripheral stalk. During catalysis, ATP synthesis in the catalytic domain of F(1) is coupled via a rotary mechanism of the central stalk subunits to proton translocation. Its function is as follows. Component of the F(0) channel, it forms part of the peripheral stalk, linking F(1) to F(0). The polypeptide is ATP synthase subunit b (Neisseria meningitidis serogroup C (strain 053442)).